A 503-amino-acid polypeptide reads, in one-letter code: Puromycin resistance protein pur8 (503 aa).

The Cytoplasmic segment spans residues 1-24; sequence MARKPDISAVPVESAACQGPDPRR. Residues 25–45 traverse the membrane as a helical segment; sequence WWGLVVILAAQLLVVLDGTVV. Residues 46–64 are Extracellular-facing; that stretch reads NIALPSVQRDLGMSDTSRQ. A helical transmembrane segment spans residues 65 to 85; the sequence is WVITAYTLAFGGLLLLGGRVA. The Cytoplasmic portion of the chain corresponds to 86-92; that stretch reads DAFGRRR. Residues 93–113 form a helical membrane-spanning segment; it reads IFAVGILGFGLASLLGGAAPD. Over 114–122 the chain is Extracellular; the sequence is PGTLFLARA. Residues 123–143 form a helical membrane-spanning segment; the sequence is LQGVFAAALAPAALALINTLF. The Cytoplasmic portion of the chain corresponds to 144–152; sequence TEPGERGKA. Residues 153–173 traverse the membrane as a helical segment; sequence FGVYGAVSGGGAAVGLLAGGL. The Extracellular segment spans residues 174 to 181; the sequence is LTEYLDWR. Residues 182–202 form a helical membrane-spanning segment; that stretch reads WCLYVNAPVALLALLGCRLLP. Residues 203 to 212 lie on the Cytoplasmic side of the membrane; it reads RDRRTGRAVR. Residues 213-233 form a helical membrane-spanning segment; the sequence is LDLPGTLLGCGGLVAIVYAFA. The Extracellular segment spans residues 234–241; sequence EAESGWGD. Residues 242–262 form a helical membrane-spanning segment; the sequence is PLVVRLLVLGVLMLVAFALVE. The Cytoplasmic segment spans residues 263–280; that stretch reads RRVQDPLLPPGVVAHRVR. The helical transmembrane segment at 281–301 threads the bilayer; that stretch reads GGSFLVVGLPQIGLFGLFLFL. At 302–313 the chain is on the extracellular side; sequence TYYLQGILDYSP. The helical transmembrane segment at 314–334 threads the bilayer; it reads VLTGVAFLPLGLGIAVGSSLI. Topologically, residues 335–346 are cytoplasmic; the sequence is AARLLPRTRPRT. A helical transmembrane segment spans residues 347-367; sequence LIVGALLAAAAGMALLTRLEP. The Extracellular segment spans residues 368 to 371; it reads DTPQ. The helical transmembrane segment at 372–392 threads the bilayer; the sequence is VYLTHLLPAQILIGLGIGCMM. Residues 393–422 are Cytoplasmic-facing; it reads MPAMHTATARVAPHEAGAAAAVVNSAQQVG. The helical transmembrane segment at 423 to 443 threads the bilayer; sequence GALGVALLNTVSTGATAAYLA. The Extracellular segment spans residues 444-461; that stretch reads DHGTSPAATVDGTVHGYT. Residues 462 to 482 traverse the membrane as a helical segment; it reads VAIAFAVGVLLLTAVLAWVLI. At 483-503 the chain is on the cytoplasmic side; the sequence is DSRTEAADETGSASVTPARPR.

The protein belongs to the major facilitator superfamily. EmrB family.

The protein resides in the cell membrane. Its function is as follows. May be involved in active puromycin efflux energized by a proton-dependent electrochemical gradient. In addition, it could be implicated in secreting N-acetylpuromycin, the last intermediate of the puromycin biosynthesis pathway, to the environment. The sequence is that of Puromycin resistance protein pur8 (pur8) from Streptomyces alboniger.